The chain runs to 110 residues: Mitochondrial pyruvate carrier 1 (110 aa).

2 helical membrane passes run 20-36 (HFWG…AGLV) and 44-61 (MISG…ALFM).

The protein belongs to the mitochondrial pyruvate carrier (MPC) (TC 2.A.105) family.

It localises to the mitochondrion inner membrane. Functionally, mediates the uptake of pyruvate into mitochondria. In Arabidopsis thaliana (Mouse-ear cress), this protein is Mitochondrial pyruvate carrier 1.